Consider the following 117-residue polypeptide: Cysteine rich necrotrophic effector Tox1 (117 aa).

The N-terminal stretch at 1–17 (MKLTMVLSVAFATLTFA) is a signal peptide. 8 cysteine pairs are disulfide-bonded: C36/C87, C44/C55, C53/C58, C54/C98, C63/C83, C67/C117, C86/C97, and C107/C110. Residues 87 to 117 (CNAGGESHELCCSIASAGIDCNPCTAGLRMC) form a chitin-binding domain region.

As to quaternary structure, interacts with host cell wall-associated kinase receptor Snn1.

The protein localises to the secreted. Its function is as follows. Necrotrophic effector that plays a critical role during fungal penetration, via its interaction with the host Snn1 protein. Snn1 is a member of the wall-associated kinase class of receptors, which are known to drive pathways for biotrophic pathogen resistance. Recognition of Tox1 by Snn1 induces mitogen-activated protein kinase genes such as MAPK3 and activates programmed cell death, which allows this necrotroph to gain nutrients and sporulate. Recognition of Tox1 by Snn1 also induces other plant defense responses, including oxidative burst and pathogenesis related (PR) gene expression. The development of necrosis and disease induced by Tox1, and particularly penetration during infection, requires light, which is probably related to the light-dependent expression of host Snn1. Tox1 plays an additional role in providing significant protection from wheat chitinases by binding chitin in the fungal cell wall. This Phaeosphaeria nodorum (strain SN15 / ATCC MYA-4574 / FGSC 10173) (Glume blotch fungus) protein is Cysteine rich necrotrophic effector Tox1.